The chain runs to 205 residues: Ribosomal RNA small subunit methyltransferase G 1 (205 aa).

S-adenosyl-L-methionine-binding positions include G77, L82, 100-102 (EKS), 129-130 (LE), and R138.

This sequence belongs to the methyltransferase superfamily. RNA methyltransferase RsmG family.

The protein localises to the cytoplasm. It carries out the reaction guanosine(527) in 16S rRNA + S-adenosyl-L-methionine = N(7)-methylguanosine(527) in 16S rRNA + S-adenosyl-L-homocysteine. Its function is as follows. Specifically methylates the N7 position of guanine in position 527 of 16S rRNA. The sequence is that of Ribosomal RNA small subunit methyltransferase G 1 from Bdellovibrio bacteriovorus (strain ATCC 15356 / DSM 50701 / NCIMB 9529 / HD100).